The chain runs to 485 residues: Pre-glycoprotein polyprotein GP complex (485 aa).

Gly-2 carries N-myristoyl glycine; by host lipidation. Residues 2–17 (GQLISFFGEIPTILQE) are Extracellular-facing. The chain crosses the membrane as a helical span at residues 18–33 (ALNIALIAVSIIATIK). Over 34–58 (GVVNVWKSGLIQLLMFVMLAGRSCS) the chain is Cytoplasmic. Cys-57 is a Zn(2+) binding site. The Extracellular segment spans residues 59–424 (VQIGHHLELE…QGRTPLSLVD (366 aa)). Intrachain disulfides connect Cys-85/Cys-225, Cys-271/Cys-284, Cys-293/Cys-302, and Cys-356/Cys-377. 4 N-linked (GlcNAc...) asparagine; by host glycosylation sites follow: Asn-88, Asn-128, Asn-179, and Asn-218. N-linked (GlcNAc...) asparagine; by host glycosylation is found at Asn-357, Asn-365, Asn-382, and Asn-387. Residues 425–445 (VCFWSTLFYTASIFLHLIRIP) traverse the membrane as a helical segment. The Cytoplasmic segment spans residues 446–485 (THRHIVGEGCPKPHRLRADSTCACGLYKQKRRPLKWVRSN). Zn(2+) contacts are provided by His-447, His-449, Cys-455, His-459, Cys-467, and Cys-469.

It belongs to the arenaviridae GPC protein family. As to quaternary structure, interacts with glycoprotein G2. Part of the GP complex (GP-C) together with glycoprotein G1 and glycoprotein G2. The GP-complex interacts with protein Z, which interacts with ribonucleocapsid; these interactions may induce virion budding. Homotrimer; disulfide-linked. In pre-fusion state, G1 homotrimers bind G2 homotrimers via ionic interactions. Part of the GP complex (GP-C) together with glycoprotein G2 and the stable signal peptide. The GP-complex interacts with protein Z, which interacts with ribonucleocapsid; these interactions may induce virion budding. In terms of assembly, homotrimer. Interacts with the stable signal peptide. In pre-fusion state, G2 homotrimers bind G1 homotrimers via ionic interactions. Part of the GP complex (GP-C) together with glycoprotein G1 and the stable signal peptide. Acidification in the endosome triggers rearrangements, which ultimately leads to a 6 helix bundle formed by the two heptad repeat domains (HR1 and HR2) in post-fusion state. The GP-complex interacts with protein Z, which interacts with ribonucleocapsid; these interactions may induce virion budding. Post-translationally, specific enzymatic cleavages in vivo yield mature proteins. GP-C polyprotein is cleaved in the endoplasmic reticulum by the host protease MBTPS1. Only cleaved glycoprotein is incorporated into virions. The SSP remains stably associated with the GP complex following cleavage by signal peptidase and plays crucial roles in the trafficking of GP through the secretory pathway. In terms of processing, myristoylation is necessary for GP2-mediated fusion activity.

It localises to the virion membrane. The protein localises to the host endoplasmic reticulum membrane. Its subcellular location is the host Golgi apparatus membrane. The protein resides in the host cell membrane. Its function is as follows. Functions as a cleaved signal peptide that is retained as the third component of the GP complex (GP-C). Helps to stabilize the spike complex in its native conformation. The SSP is required for efficient glycoprotein expression, post-translational maturation cleavage of G1 and G2, glycoprotein transport to the cell surface plasma membrane, formation of infectious virus particles, and acid pH-dependent glycoprotein-mediated cell fusion. Functionally, forms the virion spikes together with glycoprotein G2. The glycoprotein spike trimers are connected to the underlying matrix. Interacts with the host receptor leading to virus endocytosis. Forms the virion spikes together with glycoprotein G1. The glycoprotein spike trimers are connected to the underlying matrix. Class I viral fusion protein that directs fusion of viral and host endosomal membranes, leading to delivery of the nucleocapsid into the cytoplasm. Membrane fusion is mediated by irreversible conformational changes induced by acidification. This is Pre-glycoprotein polyprotein GP complex from Sigmodon hispidus (Hispid cotton rat).